The primary structure comprises 90 residues: uncharacterized protein (90 aa).

Residues 62–90 (RQLKKKQAYKPDPEASFSWSANTSTRGRR) form a disordered region. Residues 78-90 (FSWSANTSTRGRR) are compositionally biased toward polar residues.

This is an uncharacterized protein from Escherichia coli (strain K12).